The chain runs to 197 residues: Putative sulfur carrier protein aq_1421 (197 aa).

Cys17 serves as the catalytic Cysteine persulfide intermediate.

This sequence belongs to the sulfur carrier protein TusA family.

The sequence is that of Putative sulfur carrier protein aq_1421 from Aquifex aeolicus (strain VF5).